The sequence spans 383 residues: Opsin Rh3 (383 aa).

Residues 1 to 57 (MESGNVSSSLFGNVSTALRPEARLSAETRLLGWNVPPEELRHIPEHWLTYPEPPESM) are Extracellular-facing. N-linked (GlcNAc...) asparagine glycosylation is present at asparagine 13. Residues 58 to 82 (NYLLGTLYIFFTLMSMLGNGLVIWV) traverse the membrane as a helical segment. The Cytoplasmic segment spans residues 83-94 (FSAAKSLRTPSN). Residues 95–119 (ILVINLAFCDFMMMVKTPIFIYNSF) traverse the membrane as a helical segment. Over 120–133 (HQGYALGHLGCQIF) the chain is Extracellular. The cysteines at positions 130 and 207 are disulfide-linked. A helical membrane pass occupies residues 134–153 (GIIGSYTGIAAGATNAFIAY). At 154-171 (DRFNVITRPMEGKMTHGK) the chain is on the cytoplasmic side. Residues 172-196 (AIAMIIFIYMYATPWVVACYTETWG) traverse the membrane as a helical segment. Residues 197-220 (RFVPEGYLTSCTFDYLTDNFDTRL) lie on the Extracellular side of the membrane. The chain crosses the membrane as a helical span at residues 221-248 (FVACIFFFSFVCPTTMITYYYSQIVGHV). Residues 249–284 (FSHEKALRDQAKKMNVESLRSNVDKNKETAEIRIAK) are Cytoplasmic-facing. The helical transmembrane segment at 285 to 308 (AAITICFLFFCSWTPYGVMSLIGA) threads the bilayer. Residues 309–316 (FGDKTLLT) lie on the Extracellular side of the membrane. The chain crosses the membrane as a helical span at residues 317 to 341 (PGATMIPACACKMVACIDPFVYAIS). At lysine 328 the chain carries N6-(retinylidene)lysine. Residues 342 to 383 (HPRYRMELQKRCPWLALNEKAPESSAVASTSTTQEPQQTTAA) are Cytoplasmic-facing. The segment at 362 to 383 (APESSAVASTSTTQEPQQTTAA) is disordered. Residues 369–383 (ASTSTTQEPQQTTAA) are compositionally biased toward low complexity.

Belongs to the G-protein coupled receptor 1 family. Opsin subfamily. In terms of processing, phosphorylated on some or all of the serine and threonine residues present in the C-terminal region.

The protein resides in the membrane. Visual pigments are the light-absorbing molecules that mediate vision. They consist of an apoprotein, opsin, covalently linked to cis-retinal. This chain is Opsin Rh3 (Rh3), found in Drosophila melanogaster (Fruit fly).